The chain runs to 223 residues: Cuticular glutathione peroxidase (223 aa).

The first 19 residues, 1 to 19 (MSAQLLILSHVVLLQLIVA), serve as a signal peptide directing secretion. An N-linked (GlcNAc...) asparagine glycan is attached at Asn39. Cys74 is an active-site residue. Asn92 carries an N-linked (GlcNAc...) asparagine glycan.

Belongs to the glutathione peroxidase family. As to quaternary structure, homotetramer.

It is found in the secreted. The catalysed reaction is 2 glutathione + H2O2 = glutathione disulfide + 2 H2O. In terms of biological role, could inhibit the oxidative burst of leukocytes and neutralize the secondary products of lipid peroxidation, thus providing the resistance of these parasites to immune effector mechanisms and their persistence in the mammalian host. It may also be involved in the formation of cross-linking residues such as dityrosine, trityrosine and isotrityrosine identified in cuticular collagen. Highly cross-linked external cortex may also serve to protect the parasite from immune attack. The protein is Cuticular glutathione peroxidase of Wuchereria bancrofti.